Here is a 454-residue protein sequence, read N- to C-terminus: ADP-specific phosphofructokinase (454 aa).

Positions 1 to 452 (MIDEVRELGI…FLSYLSLLRR (452 aa)) constitute an ADPK domain. 3 residues coordinate Mg(2+): E263, E293, and D436. The Proton acceptor role is filled by D436.

Belongs to the carbohydrate kinase PfkC family. In terms of assembly, homotetramer. The cofactor is Mg(2+).

The protein resides in the cytoplasm. It carries out the reaction beta-D-fructose 6-phosphate + ADP = beta-D-fructose 1,6-bisphosphate + AMP + H(+). Its pathway is carbohydrate degradation; glycolysis. Inhibited by AMP and ATP. Catalyzes the phosphorylation of fructose 6-phosphate to fructose 1,6-bisphosphate using ADP as the phosphate donor. As a phosphoryl group donor, ADP can be replaced by GDP, ATP, and GTP to a limited extent. The protein is ADP-specific phosphofructokinase (pfkC) of Pyrococcus furiosus (strain ATCC 43587 / DSM 3638 / JCM 8422 / Vc1).